Here is a 199-residue protein sequence, read N- to C-terminus: Probable molybdenum cofactor guanylyltransferase (199 aa).

GTP contacts are provided by residues 6 to 8 (LAG), lysine 18, aspartate 65, and aspartate 97. Aspartate 97 serves as a coordination point for Mg(2+).

This sequence belongs to the MobA family. Mg(2+) serves as cofactor.

Its subcellular location is the cytoplasm. The enzyme catalyses Mo-molybdopterin + GTP + H(+) = Mo-molybdopterin guanine dinucleotide + diphosphate. Its function is as follows. Transfers a GMP moiety from GTP to Mo-molybdopterin (Mo-MPT) cofactor (Moco or molybdenum cofactor) to form Mo-molybdopterin guanine dinucleotide (Mo-MGD) cofactor. The polypeptide is Probable molybdenum cofactor guanylyltransferase (Staphylococcus aureus (strain Mu50 / ATCC 700699)).